An 837-amino-acid polypeptide reads, in one-letter code: Enterin neuropeptides (837 aa).

A signal peptide spans 1–25 (MAKHDVTVMTLLLVVCALHVFDAQG). Residues 26–47 (TDVKLNDGFLRSGIMNIPFQRR) constitute a propeptide that is removed on maturation. Val57 is modified (valine amide). The propeptide occupies 61–134 (SGFQSPVSPS…ENKRFSKENE (74 aa)). Val146 carries the post-translational modification Valine amide. Residues 150 to 178 (MDLSALEKELIAKLKAADLLSPLETEAPG) constitute a propeptide that is removed on maturation. Position 190 is a leucine amide (Leu190). Positions 194–201 (MPVDVFPR) are excised as a propeptide. Val211 is modified (valine amide). A propeptide spanning residues 215–234 (SGNGENYFDDLDTFGDISQR) is cleaved from the precursor. Position 244 is a valine amide (Val244). Residues 248–266 (GNTDFSRNPLARLSQVQNR) constitute a propeptide that is removed on maturation. Residue Val276 is modified to Valine amide. Residues 280 to 285 (SVHNIV) constitute a propeptide that is removed on maturation. Val297 carries the valine amide modification. The propeptide occupies 301 to 325 (DFEDASEGLDEEEGDIDGYSDDLDV). A valine amide mark is found at Val336, Val348, Val360, Val372, Val384, Val396, Val408, Val420, Val432, Val444, Val456, Val468, Val480, Val492, Val504, Val516, Val528, and Val540. A propeptide spanning residues 544–595 (ELGEDEINFLKEVDAADISRQLAEEDEKEAMVSVDDKETLSNEEDASEDDFE) is cleaved from the precursor. Residues 567–594 (EEDEKEAMVSVDDKETLSNEEDASEDDF) form a disordered region. The span at 584 to 593 (SNEEDASEDD) shows a compositional bias: acidic residues. At Glu598 the chain carries Pyrrolidone carboxylic acid (Glu); in form ENl'. At Val606 the chain carries Valine amide. A propeptide spanning residues 610 to 627 (DEEGDMGVEMEEEMESEK) is cleaved from the precursor. At Leu637 the chain carries Leucine amide. Gln641 is subject to Pyrrolidone carboxylic acid. Val649 carries the valine amide modification. A Pyrrolidone carboxylic acid modification is found at Gln653. A valine amide mark is found at Val661 and Val673. Position 677 is a pyrrolidone carboxylic acid (Gln677). Valine amide occurs at positions 685 and 697. The residue at position 701 (Gln701) is a Pyrrolidone carboxylic acid. Val709 carries the post-translational modification Valine amide. A Pyrrolidone carboxylic acid modification is found at Gln713. Valine amide is present on Val721. Gln725 bears the Pyrrolidone carboxylic acid mark. A Valine amide modification is found at Val733. Residues 734–837 (GKRSGAEDID…DSHIMATSST (104 aa)) constitute a propeptide that is removed on maturation. A disordered region spans residues 772 to 837 (GQPAAANEEE…DSHIMATSST (66 aa)). Positions 778-791 (NEEELQQEAAEESE) are enriched in acidic residues.

High expression in gut and CNS.

The protein resides in the secreted. Its function is as follows. Reduce interneurons B4/5 activity. May play a regulatory role in nonfeeding behaviors. This is Enterin neuropeptides (ENPP) from Aplysia californica (California sea hare).